A 1625-amino-acid chain; its full sequence is Probable cation-transporting ATPase I (1625 aa).

The next 8 membrane-spanning stretches (helical) occupy residues 148–168 (VVSA…PNSA), 177–197 (LAIL…GATV), 358–378 (LIAA…AGAI), 637–657 (ASES…LLLV), 673–693 (WLNP…WSAA), 778–798 (ILAV…ALLV), 968–988 (LTSK…ALAL), and 997–1017 (AVAD…PLVA). Asp1053 functions as the 4-aspartylphosphate intermediate in the catalytic mechanism. Positions 1340 and 1344 each coordinate Mg(2+). 3 helical membrane-spanning segments follow: residues 1401-1421 (ILVG…AFGA), 1432-1452 (LLVN…TSQF), and 1547-1567 (VIAT…TPVI).

It belongs to the cation transport ATPase (P-type) (TC 3.A.3) family.

The protein localises to the cell membrane. It catalyses the reaction ATP + H2O = ADP + phosphate + H(+). The polypeptide is Probable cation-transporting ATPase I (ctpI) (Mycobacterium tuberculosis (strain CDC 1551 / Oshkosh)).